A 100-amino-acid polypeptide reads, in one-letter code: C-X-C motif chemokine 2 (100 aa).

The first 31 residues, 1–31 (MAPPTRQLLNAVLVLLLLLATNHQGTGVVVA), serve as a signal peptide directing secretion. 2 cysteine pairs are disulfide-bonded: Cys36-Cys62 and Cys38-Cys78.

This sequence belongs to the intercrine alpha (chemokine CxC) family. As to quaternary structure, homotetramer. As to expression, at least expressed in the lung and trachea.

It is found in the secreted. Functionally, chemotactic for human polymorphonuclear leukocytes but does not induce chemokinesis or an oxidative burst. Contributes to neutrophil activation during inflammation. The sequence is that of C-X-C motif chemokine 2 (Cxcl2) from Rattus norvegicus (Rat).